The chain runs to 393 residues: NAD(P)H-quinone oxidoreductase subunit H, chloroplastic (393 aa).

It belongs to the complex I 49 kDa subunit family. As to quaternary structure, NDH is composed of at least 16 different subunits, 5 of which are encoded in the nucleus.

The protein localises to the plastid. Its subcellular location is the chloroplast thylakoid membrane. It carries out the reaction a plastoquinone + NADH + (n+1) H(+)(in) = a plastoquinol + NAD(+) + n H(+)(out). The enzyme catalyses a plastoquinone + NADPH + (n+1) H(+)(in) = a plastoquinol + NADP(+) + n H(+)(out). In terms of biological role, NDH shuttles electrons from NAD(P)H:plastoquinone, via FMN and iron-sulfur (Fe-S) centers, to quinones in the photosynthetic chain and possibly in a chloroplast respiratory chain. The immediate electron acceptor for the enzyme in this species is believed to be plastoquinone. Couples the redox reaction to proton translocation, and thus conserves the redox energy in a proton gradient. This is NAD(P)H-quinone oxidoreductase subunit H, chloroplastic from Solanum lycopersicum (Tomato).